The chain runs to 67 residues: Protein Tpau_2998 (67 aa).

This is Protein Tpau_2998 from Tsukamurella paurometabola (strain ATCC 8368 / DSM 20162 / CCUG 35730 / CIP 100753 / JCM 10117 / KCTC 9821 / NBRC 16120 / NCIMB 702349 / NCTC 13040) (Corynebacterium paurometabolum).